A 403-amino-acid polypeptide reads, in one-letter code: F-box/kelch-repeat protein At5g39560 (403 aa).

The 47-residue stretch at 26 to 72 folds into the F-box domain; that stretch reads PPSLMSLPYEIIENILARISKWSYPNLSLVSKSFLSLLSSPQLYKTR. 4 Kelch repeats span residues 138–182, 184–229, 248–294, and 296–340; these read EIYV…LIDQ, IYVL…VWPN, NPNA…IENV, and YACH…VNYG.

This is F-box/kelch-repeat protein At5g39560 from Arabidopsis thaliana (Mouse-ear cress).